Here is a 537-residue protein sequence, read N- to C-terminus: Chaperonin GroEL 1 (537 aa).

ATP contacts are provided by residues 29-32 (TLGP), 86-90 (DGTTT), G413, 478-480 (NAA), and D494.

Belongs to the chaperonin (HSP60) family. In terms of assembly, forms a cylinder of 14 subunits composed of two heptameric rings stacked back-to-back. Interacts with the co-chaperonin GroES.

Its subcellular location is the cytoplasm. The catalysed reaction is ATP + H2O + a folded polypeptide = ADP + phosphate + an unfolded polypeptide.. In terms of biological role, together with its co-chaperonin GroES, plays an essential role in assisting protein folding. The GroEL-GroES system forms a nano-cage that allows encapsulation of the non-native substrate proteins and provides a physical environment optimized to promote and accelerate protein folding. The polypeptide is Chaperonin GroEL 1 (Corynebacterium efficiens (strain DSM 44549 / YS-314 / AJ 12310 / JCM 11189 / NBRC 100395)).